Here is a 474-residue protein sequence, read N- to C-terminus: Transcription factor SOX-4 (474 aa).

Over residues 1-10 the composition is skewed to polar residues; it reads MVQQTNNAEN. Residues 1 to 58 form a disordered region; that stretch reads MVQQTNNAENTEALLAGESSDSGAGLELGIASSPTPGSTASTGGKADDPSWCKTPSGH. Positions 31–44 are enriched in low complexity; sequence ASSPTPGSTASTGG. The HMG box DNA-binding region spans 59 to 127; it reads IKRPMNAFMV…KHMADYPDYK (69 aa). Lys95 carries the N6-acetyllysine modification. Disordered regions lie at residues 128 to 228, 262 to 286, and 302 to 416; these read YRPR…GGGK, ARTPSASASASSAASASAALAAPGK, and LGTS…NFES. Positions 138–149 are enriched in low complexity; sequence NANSSSSAAASS. The span at 158-189 shows a compositional bias: gly residues; that stretch reads VGGSGGGGHGGGGGGGSSNAGGGGGGASGGGA. 4 stretches are compositionally biased toward low complexity: residues 266–283, 304–320, 336–354, and 366–396; these read SASASASSAASASAALAA, TSSSPVGGVGAGADPSD, APSLSGRSSAASSPAAGRS, and AASPAPSSAPSHASSSASSHSSSSSSSGSSS. Positions 397–406 are enriched in acidic residues; the sequence is SDDEFEDDLL. Positions 407–416 are enriched in low complexity; that stretch reads DLNPSSNFES. The 9aaTAD motif lies at 426 to 434; sequence SALDRDLDF.

Interacts with UBE2I. Interacts with HDAC1; interaction inhibits the transcriptional activator activity. Post-translationally, acetylation at Lys-95 by KAT5 promotes the transcription activator activity and is required during myoblast differentiation. Acetylation by KAT5 abolishes the interaction between SOX4 and HDAC1 and switches SOX4 into a transcriptional activator. As to expression, testis, brain, and heart.

It localises to the nucleus. In terms of biological role, transcriptional activator that binds with high affinity to the T-cell enhancer motif 5'-AACAAAG-3' motif. Required for IL17A-producing Vgamma2-positive gamma-delta T-cell maturation and development, via binding to regulator loci of RORC to modulate expression. Involved in skeletal myoblast differentiation by promoting gene expression of CALD1. The sequence is that of Transcription factor SOX-4 from Homo sapiens (Human).